The chain runs to 381 residues: Acetylornithine deacetylase (381 aa).

Residue His78 participates in Zn(2+) binding. Asp80 is a catalytic residue. Asp110 contacts Zn(2+). Residue Glu142 is part of the active site. The Zn(2+) site is built by Glu143, Glu167, and His353.

It belongs to the peptidase M20A family. ArgE subfamily. Homodimer. The cofactor is Zn(2+). Requires Co(2+) as cofactor. Glutathione is required as a cofactor.

Its subcellular location is the cytoplasm. The catalysed reaction is N(2)-acetyl-L-ornithine + H2O = L-ornithine + acetate. The protein operates within amino-acid biosynthesis; L-arginine biosynthesis; L-ornithine from N(2)-acetyl-L-ornithine (linear): step 1/1. Catalyzes the hydrolysis of the amide bond of N(2)-acetylated L-amino acids. Cleaves the acetyl group from N-acetyl-L-ornithine to form L-ornithine, an intermediate in L-arginine biosynthesis pathway, and a branchpoint in the synthesis of polyamines. The chain is Acetylornithine deacetylase from Moritella profunda.